Consider the following 220-residue polypeptide: NADH-quinone oxidoreductase subunit I (220 aa).

4Fe-4S ferredoxin-type domains lie at 71–102 and 112–141; these read LQRLLDSGSERCIGCGLCEKICTSNCIRIITH and DSYTINLGRCIYCGLCAEVCPELAIVMGNR. Residues C82, C85, C88, C92, C121, C124, C127, and C131 each coordinate [4Fe-4S] cluster. Residues 187-220 form a disordered region; sequence MQATPLDYVQEPSKEESKEETPTRSESHKGDENV. The span at 198-220 shows a compositional bias: basic and acidic residues; sequence PSKEESKEETPTRSESHKGDENV.

Belongs to the complex I 23 kDa subunit family. NDH-1 is composed of 14 different subunits. Subunits NuoA, H, J, K, L, M, N constitute the membrane sector of the complex. [4Fe-4S] cluster serves as cofactor.

It localises to the cell inner membrane. It carries out the reaction a quinone + NADH + 5 H(+)(in) = a quinol + NAD(+) + 4 H(+)(out). Its function is as follows. NDH-1 shuttles electrons from NADH, via FMN and iron-sulfur (Fe-S) centers, to quinones in the respiratory chain. The immediate electron acceptor for the enzyme in this species is believed to be ubiquinone. Couples the redox reaction to proton translocation (for every two electrons transferred, four hydrogen ions are translocated across the cytoplasmic membrane), and thus conserves the redox energy in a proton gradient. This Helicobacter pylori (strain G27) protein is NADH-quinone oxidoreductase subunit I.